A 132-amino-acid chain; its full sequence is Ribonuclease VapC15 (132 aa).

Residues 1–121 (MIVDTSVWIA…HRDRDYEAIR (121 aa)) form the PINc domain. Asp-96 serves as a coordination point for Mg(2+). Residues Asp-96, Asp-114, and Asp-116 each coordinate Mn(2+).

The protein belongs to the PINc/VapC protein family. As to quaternary structure, crystallizes as a VapB15-VapC15(2) heterotrimer and as a VapB15(2)-VapC15(2) heterotetramer; each toxin pair forms a homodimer which creates a channel in which the antitoxin binds. Mg(2+) is required as a cofactor. Requires Mn(2+) as cofactor.

Its activity is regulated as follows. RNase activity inhibited by EDTA. Its function is as follows. Toxic component of a type II toxin-antitoxin (TA) system. Degrades total E.coli RNA, which is partially inhibited by cognate antitoxin VapB15. Upon expression in M.smegmatis inhibits colony formation, which is neutralized by coexpression with VapB15. This chain is Ribonuclease VapC15, found in Mycobacterium tuberculosis (strain ATCC 25618 / H37Rv).